A 1189-amino-acid chain; its full sequence is Ras-specific guanine nucleotide-releasing factor 2 (1189 aa).

Residues Glu22–Tyr133 enclose the PH 1 domain. Positions Lys158–Arg193 form a coiled coil. The IQ domain occupies Asp205–Cys234. The DH domain maps to Lys243–Glu429. Residues Pro470–Asp588 enclose the PH 2 domain. An N-terminal Ras-GEF domain is found at Lys635–Gly755. The disordered stretch occupies residues Val713 to Pro738. A phosphoserine mark is found at Ser725 and Ser726. Residue Ser736 is modified to Phosphoserine; by CDK5. A regulates proteasomal degradation region spans residues Lys743–Asn751. Phosphoserine occurs at positions 745 and 749. A disordered region spans residues Leu757–Pro817. A compositionally biased stretch (low complexity) spans Ser762 to Ala776. Residues Ser801, Ser805, and Ser924 each carry the phosphoserine modification. The Ras-GEF domain maps to Ser954–Arg1186. A responsible of the affinity for farnesylated versus geranylgeranylated Ras region spans residues Ala1051–Lys1080.

Homooligomer and heterooligomer with RASGRF1. Interacts with Ras and RAC1. Interacts in a calcium-dependent manner with calmodulin. Interacts with EPB49 and probably CDK5R1. Interacts with the AMPA receptor through GRIA1. Interacts with microtubules. Phosphorylated by CDK5; down-regulates RASGRF2-mediated RAC1 activation. Post-translationally, ubiquitinated upon interaction with Ras. Ubiquitination leads to degradation through the 26S proteasome. In terms of tissue distribution, expressed in brain in the nucleus of the solitary tract. Not observed in the hippocampus (at protein level).

It localises to the cytoplasm. The protein resides in the cell membrane. It is found in the endoplasmic reticulum membrane. Its function is as follows. Functions as a calcium-regulated nucleotide exchange factor activating both Ras and RAC1 through the exchange of bound GDP for GTP. Preferentially activates HRAS in vivo compared to RRAS based on their different types of prenylation. Functions in synaptic plasticity by contributing to the induction of long term potentiation. The polypeptide is Ras-specific guanine nucleotide-releasing factor 2 (Rasgrf2) (Mus musculus (Mouse)).